The chain runs to 231 residues: Chalcone--flavanone isomerase (231 aa).

Residues Thr46, Asn112, and Ser189 each coordinate substrate.

Belongs to the chalcone isomerase family.

It catalyses the reaction a chalcone = a flavanone.. It functions in the pathway secondary metabolite biosynthesis; flavonoid biosynthesis. Its function is as follows. Catalyzes the intramolecular cyclization of bicyclic chalcones into tricyclic (S)-flavanones. Responsible for the isomerization of 4,2',4',6'-tetrahydroxychalcone (also termed chalcone) into naringenin. The protein is Chalcone--flavanone isomerase (CHI) of Hordeum vulgare (Barley).